Here is a 224-residue protein sequence, read N- to C-terminus: PKHD-type hydroxylase tll1907 (224 aa).

The Fe2OG dioxygenase domain maps to 77–176 (KIIGPLLFSR…RLVAVAWVQS (100 aa)). Fe cation is bound by residues histidine 96, aspartate 98, and histidine 157. Residue arginine 167 coordinates 2-oxoglutarate.

Fe(2+) serves as cofactor. The cofactor is L-ascorbate.

In Thermosynechococcus vestitus (strain NIES-2133 / IAM M-273 / BP-1), this protein is PKHD-type hydroxylase tll1907.